The sequence spans 291 residues: Homoserine kinase (291 aa).

80–90 (RPSSGLGSSAA) contributes to the ATP binding site.

Belongs to the GHMP kinase family. Homoserine kinase subfamily.

It is found in the cytoplasm. It catalyses the reaction L-homoserine + ATP = O-phospho-L-homoserine + ADP + H(+). The protein operates within amino-acid biosynthesis; L-threonine biosynthesis; L-threonine from L-aspartate: step 4/5. Its function is as follows. Catalyzes the ATP-dependent phosphorylation of L-homoserine to L-homoserine phosphate. This is Homoserine kinase from Haloquadratum walsbyi (strain DSM 16790 / HBSQ001).